We begin with the raw amino-acid sequence, 219 residues long: Lipid A acyltransferase PagP (219 aa).

The first 28 residues, 1-28, serve as a signal peptide directing secretion; that stretch reads MRLILISHSRLFALSALFLIPTFDSLSA. Residues 39-63 form a disordered region; it reads IDRTTQSDSTTQRDSKTRRDPAPSF. The span at 49–59 shows a compositional bias: basic and acidic residues; sequence TQRDSKTRRDP. Catalysis depends on residues His91, Asp134, and Ser135.

It belongs to the lipid A palmitoyltransferase family. Homodimer.

Its subcellular location is the cell outer membrane. The enzyme catalyses a lipid A + a 1,2-diacyl-sn-glycero-3-phosphocholine = a hepta-acyl lipid A + a 2-acyl-sn-glycero-3-phosphocholine. It catalyses the reaction a lipid IVA + a 1,2-diacyl-sn-glycero-3-phosphocholine = a lipid IVB + a 2-acyl-sn-glycero-3-phosphocholine. It carries out the reaction a lipid IIA + a 1,2-diacyl-sn-glycero-3-phosphocholine = a lipid IIB + a 2-acyl-sn-glycero-3-phosphocholine. Transfers a fatty acid residue from the sn-1 position of a phospholipid to the N-linked hydroxyfatty acid chain on the proximal unit of lipid A or its precursors. The polypeptide is Lipid A acyltransferase PagP (Dickeya zeae (strain Ech586) (Dickeya dadantii (strain Ech586))).